The chain runs to 465 residues: Amino-acid carrier protein AlsT (465 aa).

10 consecutive transmembrane segments (helical) span residues 20–40 (LFYI…FIQF), 82–102 (VALA…VVAA), 142–162 (WLGI…FNAV), 177–197 (VNKI…IFGG), 208–228 (IVPV…ITNI), 241–261 (NALG…VIGA), 296–316 (LGVF…ILLY), 336–356 (IGGW…FSSV), 382–402 (IAVI…VWDM), and 405–425 (LFMG…SNVA).

It belongs to the alanine or glycine:cation symporter (AGCS) (TC 2.A.25) family.

It localises to the cell membrane. This is Amino-acid carrier protein AlsT (alsT) from Bacillus subtilis (strain 168).